We begin with the raw amino-acid sequence, 120 residues long: NAD(P)H-quinone oxidoreductase subunit 3, chloroplastic (120 aa).

The next 3 helical transmembrane spans lie at 7 to 27 (YNYF…AFSI), 64 to 84 (MFAL…PWAM), and 89 to 109 (LGIP…IGLI).

This sequence belongs to the complex I subunit 3 family. As to quaternary structure, NDH is composed of at least 16 different subunits, 5 of which are encoded in the nucleus.

It is found in the plastid. The protein resides in the chloroplast thylakoid membrane. It catalyses the reaction a plastoquinone + NADH + (n+1) H(+)(in) = a plastoquinol + NAD(+) + n H(+)(out). The enzyme catalyses a plastoquinone + NADPH + (n+1) H(+)(in) = a plastoquinol + NADP(+) + n H(+)(out). In terms of biological role, NDH shuttles electrons from NAD(P)H:plastoquinone, via FMN and iron-sulfur (Fe-S) centers, to quinones in the photosynthetic chain and possibly in a chloroplast respiratory chain. The immediate electron acceptor for the enzyme in this species is believed to be plastoquinone. Couples the redox reaction to proton translocation, and thus conserves the redox energy in a proton gradient. This Anthoceros angustus (Hornwort) protein is NAD(P)H-quinone oxidoreductase subunit 3, chloroplastic.